Consider the following 234-residue polypeptide: Chalcone--flavanone isomerase 1 (234 aa).

Substrate is bound by residues Thr50, Asn115, and Ser192.

The protein belongs to the chalcone isomerase family.

The enzyme catalyses a chalcone = a flavanone.. It functions in the pathway secondary metabolite biosynthesis; flavonoid biosynthesis. In terms of biological role, catalyzes the intramolecular cyclization of bicyclic chalcones into tricyclic (S)-flavanones. Responsible for the isomerization of 4,2',4',6'-tetrahydroxychalcone (also termed chalcone) into naringenin. In Vitis vinifera (Grape), this protein is Chalcone--flavanone isomerase 1 (CHI1).